A 236-amino-acid polypeptide reads, in one-letter code: Large ribosomal subunit protein uL3 (236 aa).

Disordered stretches follow at residues 132–153 (SNRASHGNSRSHNVPGSIGMAQ) and 200–236 (KGGDVTVSPSIRSARPTNNGNVNAAAKGGAKSGKKGG). A compositionally biased stretch (polar residues) spans 133–145 (NRASHGNSRSHNV). Residue Gln153 is modified to N5-methylglutamine. Polar residues predominate over residues 206-216 (VSPSIRSARPT). Residues 217–228 (NNGNVNAAAKGG) are compositionally biased toward low complexity.

The protein belongs to the universal ribosomal protein uL3 family. Part of the 50S ribosomal subunit. Forms a cluster with proteins L14 and L19. Methylated by PrmB.

Functionally, one of the primary rRNA binding proteins, it binds directly near the 3'-end of the 23S rRNA, where it nucleates assembly of the 50S subunit. This is Large ribosomal subunit protein uL3 from Nitrosospira multiformis (strain ATCC 25196 / NCIMB 11849 / C 71).